Here is a 510-residue protein sequence, read N- to C-terminus: ATP synthase subunit alpha (510 aa).

Residue 169–176 (GDRQTGKT) participates in ATP binding.

It belongs to the ATPase alpha/beta chains family. In terms of assembly, F-type ATPases have 2 components, CF(1) - the catalytic core - and CF(0) - the membrane proton channel. CF(1) has five subunits: alpha(3), beta(3), gamma(1), delta(1), epsilon(1). CF(0) has four main subunits: a(1), b(1), b'(1) and c(9-12).

It localises to the cell inner membrane. It carries out the reaction ATP + H2O + 4 H(+)(in) = ADP + phosphate + 5 H(+)(out). Its function is as follows. Produces ATP from ADP in the presence of a proton gradient across the membrane. The alpha chain is a regulatory subunit. The polypeptide is ATP synthase subunit alpha (Rhodopseudomonas palustris (strain BisB18)).